Consider the following 364-residue polypeptide: 3-isopropylmalate dehydrogenase (364 aa).

An NAD(+)-binding site is contributed by 76–89 (GPKWDGNAPEKRPE). Residues arginine 96, arginine 106, arginine 134, and aspartate 223 each contribute to the substrate site. Positions 223, 247, and 251 each coordinate Mg(2+). 281–293 (GSAPDIAGTGAAN) lines the NAD(+) pocket.

Belongs to the isocitrate and isopropylmalate dehydrogenases family. LeuB type 1 subfamily. In terms of assembly, homodimer. Mg(2+) is required as a cofactor. Mn(2+) serves as cofactor.

Its subcellular location is the cytoplasm. The enzyme catalyses (2R,3S)-3-isopropylmalate + NAD(+) = 4-methyl-2-oxopentanoate + CO2 + NADH. It functions in the pathway amino-acid biosynthesis; L-leucine biosynthesis; L-leucine from 3-methyl-2-oxobutanoate: step 3/4. Functionally, catalyzes the oxidation of 3-carboxy-2-hydroxy-4-methylpentanoate (3-isopropylmalate) to 3-carboxy-4-methyl-2-oxopentanoate. The product decarboxylates to 4-methyl-2 oxopentanoate. The chain is 3-isopropylmalate dehydrogenase from Shouchella clausii (strain KSM-K16) (Alkalihalobacillus clausii).